A 519-amino-acid polypeptide reads, in one-letter code: Probable cytochrome P450 6g2 (519 aa).

Heme is bound at residue C460.

This sequence belongs to the cytochrome P450 family. Heme is required as a cofactor.

The protein resides in the endoplasmic reticulum membrane. The protein localises to the microsome membrane. May be involved in the metabolism of insect hormones and in the breakdown of synthetic insecticides. This Drosophila melanogaster (Fruit fly) protein is Probable cytochrome P450 6g2 (Cyp6g2).